The primary structure comprises 185 residues: ATP-dependent protease subunit HslV (185 aa).

Threonine 12 is a catalytic residue. Alanine 168, cysteine 171, and threonine 174 together coordinate Na(+).

Belongs to the peptidase T1B family. HslV subfamily. A double ring-shaped homohexamer of HslV is capped on each side by a ring-shaped HslU homohexamer. The assembly of the HslU/HslV complex is dependent on binding of ATP.

It localises to the cytoplasm. The enzyme catalyses ATP-dependent cleavage of peptide bonds with broad specificity.. Its activity is regulated as follows. Allosterically activated by HslU binding. Its function is as follows. Protease subunit of a proteasome-like degradation complex believed to be a general protein degrading machinery. The polypeptide is ATP-dependent protease subunit HslV (Cereibacter sphaeroides (strain ATCC 17025 / ATH 2.4.3) (Rhodobacter sphaeroides)).